The following is a 300-amino-acid chain: Protoheme IX farnesyltransferase (300 aa).

The next 9 helical transmembrane spans lie at 24–44 (VTQL…PGMV), 48–68 (VLLG…AINC), 94–114 (LQIL…LYTF), 118–138 (LTMW…TLLL), 146–166 (IVIG…AVTG), 172–192 (AWIL…VLAL), 217–237 (LHIL…FISG), 239–259 (SGAV…AYAW), and 278–298 (IVYL…RPVI).

It belongs to the UbiA prenyltransferase family. Protoheme IX farnesyltransferase subfamily.

It localises to the cell inner membrane. It carries out the reaction heme b + (2E,6E)-farnesyl diphosphate + H2O = Fe(II)-heme o + diphosphate. The protein operates within porphyrin-containing compound metabolism; heme O biosynthesis; heme O from protoheme: step 1/1. Converts heme B (protoheme IX) to heme O by substitution of the vinyl group on carbon 2 of heme B porphyrin ring with a hydroxyethyl farnesyl side group. This is Protoheme IX farnesyltransferase from Burkholderia thailandensis (strain ATCC 700388 / DSM 13276 / CCUG 48851 / CIP 106301 / E264).